The sequence spans 131 residues: Putative gamma-taxilin 2 (131 aa).

Belongs to the taxilin family.

The protein is Putative gamma-taxilin 2 (TXLNGY) of Pan troglodytes (Chimpanzee).